The primary structure comprises 492 residues: 5-taurinomethyluridine-[tRNA] synthase subunit GTPB3, mitochondrial (492 aa).

The N-terminal 20 residues, Met-1–Cys-20, are a transit peptide targeting the mitochondrion. Positions 52, 112, and 152 each coordinate 5,10-methylenetetrahydrofolate. The 168-residue stretch at Gly-249 to Ala-416 folds into the TrmE-type G domain. GTP is bound by residues Gly-256 to Ser-263, Gly-282 to Asp-286, Asp-303 to Gly-306, Asn-374 to Asp-377, and Ser-397 to Leu-399. Asn-259 contributes to the K(+) binding site. 2 residues coordinate Mg(2+): Ser-263 and Thr-284. Lys-492 contributes to the 5,10-methylenetetrahydrofolate binding site.

This sequence belongs to the TRAFAC class TrmE-Era-EngA-EngB-Septin-like GTPase superfamily. TrmE GTPase family. Homodimer; forms a dimer in the presence of potassium. Interacts with MTO1; forms the GTPBP3-MTO1 complex composed of homodimers of GTPBP3 and MTO1. As to quaternary structure, homodimer, forms homodimer in vivo. It depends on K(+) as a cofactor. Ubiquitously expressed.

It localises to the mitochondrion. Its subcellular location is the cytoplasm. The enzyme catalyses GTP + H2O = GDP + phosphate + H(+). Functionally, GTPase component of the GTPBP3-MTO1 complex that catalyzes the 5-taurinomethyluridine (taum(5)U) modification at the 34th wobble position (U34) of mitochondrial tRNAs (mt-tRNAs), which plays a role in mt-tRNA decoding and mitochondrial translation. Taum(5)U formation on mammalian mt-tRNA requires the presence of both GTPBP3-mediated GTPase activity and MTO1 catalytic activity. This chain is 5-taurinomethyluridine-[tRNA] synthase subunit GTPB3, mitochondrial, found in Homo sapiens (Human).